The chain runs to 2554 residues: Protein sevenless (2554 aa).

A compositionally biased stretch (polar residues) spans 1–10; the sequence is MTMFWQQNVD. The disordered stretch occupies residues 1–25; that stretch reads MTMFWQQNVDHQSDEQDKQAKGAAP. The Extracellular segment spans residues 1 to 2123; that stretch reads MTMFWQQNVD…AEPFVSPEKR (2123 aa). The span at 11-20 shows a compositional bias: basic and acidic residues; it reads HQSDEQDKQA. Asparagine 30 carries N-linked (GlcNAc...) asparagine glycosylation. The segment covering 51–70 has biased composition (low complexity); that stretch reads NQQAPGTSSSSSNSQNASPS. The disordered stretch occupies residues 51–75; it reads NQQAPGTSSSSSNSQNASPSKIVVR. Asparagine 129 is a glycosylation site (N-linked (GlcNAc...) asparagine). Residues 181-208 are disordered; sequence SRPQSTMAHHPDDRDRDRDPSEEQHGVD. Basic and acidic residues predominate over residues 189–208; the sequence is HHPDDRDRDRDPSEEQHGVD. Positions 440 to 533 constitute a Fibronectin type-III 1 domain; sequence APVIEHLMGL…GFVQTHSARN (94 aa). N-linked (GlcNAc...) asparagine glycosylation is found at asparagine 481, asparagine 505, asparagine 617, and asparagine 647. The Fibronectin type-III 2 domain maps to 824 to 924; that stretch reads AGGKPHSLKA…EPLAARTWPL (101 aa). Residue asparagine 966 is glycosylated (N-linked (GlcNAc...) asparagine). One copy of the LDL-receptor class B repeat lies at 1010–1053; it reads GRVYWTDLARNCVVRMDPWSGSRELLPVFEANFLALDPRQGHLY. 2 consecutive Fibronectin type-III domains span residues 1202-1290 and 1294-1397; these read LPDS…TPPV and QPRR…VAPE. Residues asparagine 1228, asparagine 1313, asparagine 1353, asparagine 1550, asparagine 1557, asparagine 1639, asparagine 1725, asparagine 1756, asparagine 1804, asparagine 1889, asparagine 1947, and asparagine 2073 are each glycosylated (N-linked (GlcNAc...) asparagine). Fibronectin type-III domains lie at 1801–1901, 1902–1988, and 1995–2117; these read PPRN…SFAE, LPEL…VYET, and QPGK…AEPF. The helical transmembrane segment at 2124–2147 threads the bilayer; that stretch reads GSLVLAIIAPAAIVSSCVLALVLV. Over 2148-2554 the chain is Cytoplasmic; sequence RKVQKRRLRA…LYANEGVSRL (407 aa). In terms of domain architecture, Protein kinase spans 2209–2485; it reads LKLLRFLGSG…RCYNTLHAIS (277 aa). ATP-binding positions include 2215-2223 and lysine 2242; that span reads LGSGAFGEV. The active-site Proton acceptor is aspartate 2343. Phosphotyrosine; by autocatalysis is present on tyrosine 2380. The segment covering 2515-2527 has biased composition (basic and acidic residues); the sequence is GQPLEEHREHNER. Residues 2515 to 2534 are disordered; sequence GQPLEEHREHNERPEDENLT.

This sequence belongs to the protein kinase superfamily. Tyr protein kinase family. Insulin receptor subfamily. As to quaternary structure, may form a complex with drk and Sos. Binds the phosphotyrosine interaction domain (PID) of Dab.

It is found in the cell membrane. It catalyses the reaction L-tyrosyl-[protein] + ATP = O-phospho-L-tyrosyl-[protein] + ADP + H(+). Receptor for an extracellular signal required to instruct a cell to differentiate into an R7 photoreceptor. The ligand for sev is the boss (bride of sevenless) protein on the surface of the neighboring R8 cell. This is Protein sevenless (sev) from Drosophila melanogaster (Fruit fly).